The chain runs to 267 residues: DNA repair protein RecO (267 aa).

It belongs to the RecO family.

Functionally, involved in DNA repair and RecF pathway recombination. The polypeptide is DNA repair protein RecO (Prochlorococcus marinus (strain MIT 9313)).